Here is a 239-residue protein sequence, read N- to C-terminus: 7-cyano-7-deazaguanine synthase (239 aa).

8 to 18 (FSGGLDSTASL) provides a ligand contact to ATP. Positions 194, 209, 212, and 215 each coordinate Zn(2+).

Belongs to the QueC family.

It carries out the reaction 7-carboxy-7-deazaguanine + NH4(+) + ATP = 7-cyano-7-deazaguanine + ADP + phosphate + H2O + H(+). It participates in purine metabolism; 7-cyano-7-deazaguanine biosynthesis. In terms of biological role, catalyzes the ATP-dependent conversion of 7-carboxy-7-deazaguanine (CDG) to 7-cyano-7-deazaguanine (preQ(0)). This chain is 7-cyano-7-deazaguanine synthase, found in Pyrococcus abyssi (strain GE5 / Orsay).